A 268-amino-acid chain; its full sequence is Cytochrome c oxidase subunit 3 (268 aa).

The next 7 helical transmembrane spans lie at 19 to 39 (PWPI…VLTM), 49 to 69 (FDLG…DIVI), 85 to 105 (LIIG…SVFW), 124 to 144 (PVGI…IILL), 165 to 185 (SIIG…FQAF), 202 to 222 (VFFA…LFLF), and 245 to 265 (ILYW…VYFW).

The protein belongs to the cytochrome c oxidase subunit 3 family. Component of the cytochrome c oxidase (complex IV, CIV), a multisubunit enzyme composed of a catalytic core of 3 subunits and several supernumerary subunits. The complex exists as a monomer or a dimer and forms supercomplexes (SCs) in the inner mitochondrial membrane with ubiquinol-cytochrome c oxidoreductase (cytochrome b-c1 complex, complex III, CIII).

It is found in the mitochondrion inner membrane. The catalysed reaction is 4 Fe(II)-[cytochrome c] + O2 + 8 H(+)(in) = 4 Fe(III)-[cytochrome c] + 2 H2O + 4 H(+)(out). Functionally, component of the cytochrome c oxidase, the last enzyme in the mitochondrial electron transport chain which drives oxidative phosphorylation. The respiratory chain contains 3 multisubunit complexes succinate dehydrogenase (complex II, CII), ubiquinol-cytochrome c oxidoreductase (cytochrome b-c1 complex, complex III, CIII) and cytochrome c oxidase (complex IV, CIV), that cooperate to transfer electrons derived from NADH and succinate to molecular oxygen, creating an electrochemical gradient over the inner membrane that drives transmembrane transport and the ATP synthase. Cytochrome c oxidase is the component of the respiratory chain that catalyzes the reduction of oxygen to water. Electrons originating from reduced cytochrome c in the intermembrane space (IMS) are transferred via the dinuclear copper A center (CU(A)) of subunit 2 and heme A of subunit 1 to the active site in subunit 1, a binuclear center (BNC) formed by heme A3 and copper B (CU(B)). The BNC reduces molecular oxygen to 2 water molecules using 4 electrons from cytochrome c in the IMS and 4 protons from the mitochondrial matrix. The protein is Cytochrome c oxidase subunit 3 (COIII) of Schizophyllum commune (Split gill fungus).